A 364-amino-acid chain; its full sequence is N-acetyl-gamma-glutamyl-phosphate reductase (364 aa).

Cys-157 is an active-site residue.

The protein belongs to the NAGSA dehydrogenase family. Type 1 subfamily.

The protein resides in the cytoplasm. The enzyme catalyses N-acetyl-L-glutamate 5-semialdehyde + phosphate + NADP(+) = N-acetyl-L-glutamyl 5-phosphate + NADPH + H(+). Its pathway is amino-acid biosynthesis; L-arginine biosynthesis; N(2)-acetyl-L-ornithine from L-glutamate: step 3/4. Functionally, catalyzes the NADPH-dependent reduction of N-acetyl-5-glutamyl phosphate to yield N-acetyl-L-glutamate 5-semialdehyde. This chain is N-acetyl-gamma-glutamyl-phosphate reductase, found in Bifidobacterium longum (strain DJO10A).